We begin with the raw amino-acid sequence, 1018 residues long: QMSAGYDDKSPAMPVPGPMGPMGPRGPPGSPGASGPQGFTGPPGEPGEAGPSGAMGPRGPAGPPGKNGEDGESGKPGRGGERGPPGPQGARGFSGLDGAKGDSGPAGPKGESGAPGENGTPGAMGPRGNDGAAGAAGPPGPTGPAGPPGFPGGPGAKGDAGAQGGRGPEGPAGARGEPGNPGPAGAAGPSGNPGTDGAAGPKGTPGAAGVAGAPGFPGPRGPSGPQGAAGAPGPKGNTGEVGAPGAKGEAGAKGEAGAPGVQGPPGPSGEEGKRGARGEPGAAGARGGPGGRGFPGSDGPAGPKGATGERGAPGAVGPKGATGEPGRTGEPGLPGAKGMTGSPGSPGPDGKTGAAGPSGQDGRPGPPGPVGARGQPGVMGFPGPKGAAGEGGKPGERGVMGPTGAAGAPGKDGDVGAPGPSGPAGPAGERXXXGPAGAPGFQGLPGPGEQGLPGEAGATGPAGARGAPGALGPAGARGSPGSSGNDGAKGDAGAPGAPGAQGPPGLQGMPGERGAAGLPGLRGDRGDQGAKGADGAPGKDGPRGLTGPLGLPGPAGATGDKGEPGPAGPVGPGGARGAPGERGESGPPGPAGFAGPPGADGQPGAKGEAGDNGAKGDAGPPGAAGPTGAPGPQGPVGNTGPKGARGAAGPPGATGFPGAAGRVGPPGPSGNPGPPGPAGGTGKEGPKGNRGETGPAGRTGEVGAAGPPGPAGEKGSPGAEGATGSAGLPGPQVGLPGQRGERXXPGLPGPAGEPGKPGPSGPGGERGPPGPMGPPGLAGAPGEPGREGSPGNEGSAGRDGAAGPKGDRGESGPSGAPGAPGPPGAPGPVGPAGKNGDRGETGPAGPAGSAGPAGPRGPAGAPGLRGDKGESGEAGERGFTGMQGPPGPSGSSGEQGPAGAAGPAGPRGPAGSAGSPGKDGMSGLPGPTGPPGPRGGFDLGFLSQPQEKAPDPFRDRDLEVDSTLKSLSQQLEQLRSPDGTRSGEYWLDPDQGCTEDALKFTYSVLEDGCTSHTGTWGK.

Basic and acidic residues predominate over residues 1–10 (QMSAGYDDKS). The segment at 1-991 (QMSAGYDDKS…SGEYWLDPDQ (991 aa)) is disordered. Residues 13 to 30 (MPVPGPMGPMGPRGPPGS) are compositionally biased toward pro residues. Positions 31–58 (PGASGPQGFTGPPGEPGEAGPSGAMGPR) are enriched in low complexity. Positions 67–81 (NGEDGESGKPGRGGE) are enriched in basic and acidic residues. The segment covering 126–136 (PRGNDGAAGAA) has biased composition (low complexity). Residues 138–151 (PPGPTGPAGPPGFP) are compositionally biased toward pro residues. Residues 152 to 170 (GGPGAKGDAGAQGGRGPEG) are compositionally biased toward gly residues. Low complexity-rich tracts occupy residues 171–214 (PAGA…AGAP) and 223–261 (SGPQ…APGV). Positions 284 to 296 (GARGGPGGRGFPG) are enriched in gly residues. Low complexity-rich tracts occupy residues 370–385 (VGAR…PGPK), 424–442 (AGPA…PGFQ), 452–510 (LPGE…QGMP), and 543–558 (RGLT…AGAT). Residues 568-577 (GPVGPGGARG) are compositionally biased toward gly residues. Low complexity-rich tracts occupy residues 591 to 627 (AGFA…AGPT) and 641 to 663 (PKGA…AGRV). Residues 665 to 677 (PPGPSGNPGPPGP) show a composition bias toward pro residues. Low complexity-rich tracts occupy residues 701–746 (EVGA…XXPG) and 775–795 (PGLA…NEGS). The span at 819-829 (APGPPGAPGPV) shows a compositional bias: pro residues. Low complexity predominate over residues 843–862 (PAGPAGSAGPAGPRGPAGAP). Basic and acidic residues predominate over residues 865 to 876 (RGDKGESGEAGE). Residues 889–925 (SGSSGEQGPAGAAGPAGPRGPAGSAGSPGKDGMSGLP) are compositionally biased toward low complexity. Residues 932–1018 (GPRGGFDLGF…CTSHTGTWGK (87 aa)) enclose the Fibrillar collagen NC1 domain. Positions 948–959 (KAPDPFRDRDLE) are enriched in basic and acidic residues. Positions 963–973 (TLKSLSQQLEQ) are enriched in polar residues.

This sequence belongs to the fibrillar collagen family.

It is found in the secreted. It localises to the extracellular space. Its subcellular location is the extracellular matrix. This is Collagen, type I, alpha 1a from Epinephelus costae (Goldblotch grouper).